Consider the following 414-residue polypeptide: Esterase FrsA (414 aa).

Belongs to the FrsA family.

It catalyses the reaction a carboxylic ester + H2O = an alcohol + a carboxylate + H(+). Catalyzes the hydrolysis of esters. The chain is Esterase FrsA from Escherichia coli O7:K1 (strain IAI39 / ExPEC).